Here is a 129-residue protein sequence, read N- to C-terminus: MSRKESRVQAFQTLFQLEMKDSDLTINEAISFIKDDNPDLDFEFIHWLVSGVKDHEPVLDETISPNLKDWTIARLLKTDRIILRMATYEILHSDTPAKVVMNEAVELTKQFSDDDHYKFINGVLSNIKK.

Belongs to the NusB family.

Functionally, involved in transcription antitermination. Required for transcription of ribosomal RNA (rRNA) genes. Binds specifically to the boxA antiterminator sequence of the ribosomal RNA (rrn) operons. The chain is Transcription antitermination protein NusB from Staphylococcus aureus (strain MRSA252).